Here is a 331-residue protein sequence, read N- to C-terminus: NADH-quinone oxidoreductase subunit H (331 aa).

Helical transmembrane passes span 5 to 25, 45 to 65, 78 to 98, 122 to 142, 156 to 176, 192 to 212, 245 to 265, 271 to 291, and 311 to 331; these read LFFVITTIVKAVVILAVMASL, GPDMVGPAGVLQIVADMIKLF, FIFLIAPLISAIAAFAALAPV, VLYIAGVAAVCVFSPLAAGLA, VVALLSFEVVAGMALLSVVMV, IFNWLIFKQPLAFVLFVMASF, FFIGEYTNMIAASIIITLLFL, FLFIPGALMIILKSSLVFFFF, and WKILLPLGILNVVITGFALLI.

Belongs to the complex I subunit 1 family. NDH-1 is composed of 14 different subunits. Subunits NuoA, H, J, K, L, M, N constitute the membrane sector of the complex.

The protein localises to the cell inner membrane. The enzyme catalyses a quinone + NADH + 5 H(+)(in) = a quinol + NAD(+) + 4 H(+)(out). Its function is as follows. NDH-1 shuttles electrons from NADH, via FMN and iron-sulfur (Fe-S) centers, to quinones in the respiratory chain. The immediate electron acceptor for the enzyme in this species is believed to be ubiquinone. Couples the redox reaction to proton translocation (for every two electrons transferred, four hydrogen ions are translocated across the cytoplasmic membrane), and thus conserves the redox energy in a proton gradient. This subunit may bind ubiquinone. The protein is NADH-quinone oxidoreductase subunit H of Campylobacter concisus (strain 13826).